The following is a 353-amino-acid chain: 3-dehydroquinate synthase (353 aa).

NAD(+) is bound by residues 61–66, 119–120, lysine 132, and lysine 141; these read DGEEAK and TT. Residues glutamate 174, histidine 238, and histidine 254 each contribute to the Zn(2+) site.

It belongs to the sugar phosphate cyclases superfamily. Dehydroquinate synthase family. It depends on Co(2+) as a cofactor. Zn(2+) is required as a cofactor. NAD(+) serves as cofactor.

The protein resides in the cytoplasm. It carries out the reaction 7-phospho-2-dehydro-3-deoxy-D-arabino-heptonate = 3-dehydroquinate + phosphate. Its pathway is metabolic intermediate biosynthesis; chorismate biosynthesis; chorismate from D-erythrose 4-phosphate and phosphoenolpyruvate: step 2/7. Functionally, catalyzes the conversion of 3-deoxy-D-arabino-heptulosonate 7-phosphate (DAHP) to dehydroquinate (DHQ). In Sulfolobus acidocaldarius (strain ATCC 33909 / DSM 639 / JCM 8929 / NBRC 15157 / NCIMB 11770), this protein is 3-dehydroquinate synthase.